The primary structure comprises 787 residues: uncharacterized protein (787 aa).

Residues 1-22 form the signal peptide; it reads MKFKYCAIFFSGFLGLSAILAA. A lipid anchor (N-palmitoyl cysteine) is attached at C23. The S-diacylglycerol cysteine moiety is linked to residue C23. 2 disordered regions span residues 178–270 and 473–495; these read SDNV…DNKI and KSKE…KKES. Residues 181–208 are compositionally biased toward polar residues; it reads VKVSQRTGETTQKSKVTNPLKINTQNDP. Basic and acidic residues predominate over residues 209-219; sequence ATKDLWEKIEA. The span at 242 to 261 shows a compositional bias: low complexity; that stretch reads SSSSSLVNLKQSTDQTTTDD.

The protein belongs to the MG185/MG260 family.

Its subcellular location is the cell membrane. This is an uncharacterized protein from Mycoplasma pneumoniae (strain ATCC 29342 / M129 / Subtype 1) (Mycoplasmoides pneumoniae).